Here is a 313-residue protein sequence, read N- to C-terminus: uncharacterized protein (313 aa).

Transmembrane regions (helical) follow at residues 41–61 (LAGT…GLMV), 68–88 (VHSV…FHYF), and 102–122 (QLLL…KLVL).

Belongs to the cytochrome b family.

The protein localises to the mitochondrion membrane. This is an uncharacterized protein from Arabidopsis thaliana (Mouse-ear cress).